The sequence spans 194 residues: ATP-dependent Clp protease proteolytic subunit 3 (194 aa).

The Nucleophile role is filled by Ser-96. The active site involves His-121.

The protein belongs to the peptidase S14 family. In terms of assembly, fourteen ClpP subunits assemble into 2 heptameric rings which stack back to back to give a disk-like structure with a central cavity, resembling the structure of eukaryotic proteasomes.

The protein resides in the cytoplasm. The enzyme catalyses Hydrolysis of proteins to small peptides in the presence of ATP and magnesium. alpha-casein is the usual test substrate. In the absence of ATP, only oligopeptides shorter than five residues are hydrolyzed (such as succinyl-Leu-Tyr-|-NHMec, and Leu-Tyr-Leu-|-Tyr-Trp, in which cleavage of the -Tyr-|-Leu- and -Tyr-|-Trp bonds also occurs).. Its function is as follows. Cleaves peptides in various proteins in a process that requires ATP hydrolysis. Has a chymotrypsin-like activity. Plays a major role in the degradation of misfolded proteins. The chain is ATP-dependent Clp protease proteolytic subunit 3 from Rhizobium etli (strain ATCC 51251 / DSM 11541 / JCM 21823 / NBRC 15573 / CFN 42).